An 836-amino-acid polypeptide reads, in one-letter code: uncharacterized protein (836 aa).

Disordered stretches follow at residues 1 to 25 (MDST…NEEE), 692 to 718 (DSRS…NNQR), and 789 to 836 (ESSG…GYAS). Polar residues-rich tracts occupy residues 789–799 (ESSGINVSNTR) and 825–836 (IDSSSAQNGYAS).

It is found in the nucleus. This is an uncharacterized protein from Schizosaccharomyces pombe (strain 972 / ATCC 24843) (Fission yeast).